Reading from the N-terminus, the 142-residue chain is Hemoglobin subunit alpha-A (142 aa).

A Globin domain is found at V2–R142. O2 is bound at residue H59. Position 88 (H88) interacts with heme b.

This sequence belongs to the globin family. Heterotetramer of two alpha chains and two beta chains. Red blood cells.

Involved in oxygen transport from the lung to the various peripheral tissues. This chain is Hemoglobin subunit alpha-A (HBAA), found in Anser anser anser (Western greylag goose).